The primary structure comprises 101 residues: Small ribosomal subunit protein uS14 (101 aa).

Belongs to the universal ribosomal protein uS14 family. As to quaternary structure, part of the 30S ribosomal subunit. Contacts proteins S3 and S10.

Functionally, binds 16S rRNA, required for the assembly of 30S particles and may also be responsible for determining the conformation of the 16S rRNA at the A site. The polypeptide is Small ribosomal subunit protein uS14 (Bartonella henselae (strain ATCC 49882 / DSM 28221 / CCUG 30454 / Houston 1) (Rochalimaea henselae)).